The following is a 150-amino-acid chain: Thyroid hormone-inducible hepatic protein (150 aa).

The disordered stretch occupies residues 83 to 105; sequence KVAGNEGSEAENEAAETEEAEED. At Ser90 the chain carries Phosphoserine. Over residues 90–105 the composition is skewed to acidic residues; the sequence is SEAENEAAETEEAEED.

Belongs to the SPOT14 family. Homodimer. Heterodimer with MID1IP1. Interacts with THRB and PLAGL1. Highly expressed in liver, lactating mammary gland, epididymal, retroperitoneal and brown fat. Mainly expressed in tissues that synthesize triglycerides.

It localises to the nucleus. The protein localises to the cytoplasm. Plays a role in the regulation of lipogenesis, especially in lactating mammary gland. Important for the biosynthesis of triglycerides with medium-length fatty acid chains. May modulate lipogenesis by interacting with MID1IP1 and preventing its interaction with ACACA. May function as transcriptional coactivator. May modulate the transcription factor activity of THRB. The polypeptide is Thyroid hormone-inducible hepatic protein (Thrsp) (Rattus norvegicus (Rat)).